The chain runs to 488 residues: UDP-glycosyltransferase 73B1 (488 aa).

Residues Thr297, 356 to 358 (APQ), 373 to 381 (HCGWNSLLE), and 395 to 398 (GAEQ) each bind UDP-alpha-D-glucose.

Belongs to the UDP-glycosyltransferase family.

Functionally, possesses low quercetin 3-O-glucosyltransferase and 7-O-glucosyltransferase activities in vitro. In Arabidopsis thaliana (Mouse-ear cress), this protein is UDP-glycosyltransferase 73B1 (UGT73B1).